Here is a 60-residue protein sequence, read N- to C-terminus: SKEGMSYEEPENDEGVACTGQYAESFCLNGGTCRYIQSIGEYYCICVGDYTGHRCEKKQV.

Positions 1 to 6 (SKEGMS) are cleaved as a signal peptide. Positions 7 to 12 (YEEPEN) are excised as a propeptide. In terms of domain architecture, EGF-like spans 14 to 56 (EGVACTGQYAESFCLNGGTCRYIQSIGEYYCICVGDYTGHRCE). 3 cysteine pairs are disulfide-bonded: C18/C33, C27/C44, and C46/C55.

The protein belongs to the EGF domain peptide family.

Its subcellular location is the secreted. The protein resides in the nematocyst. Has both toxic and EGF activity. Its EGF activity consists of rounding cells (morphological change) and inducing tyrosine phosphorylation of the EGFR in A431 cells, but with a lower potency that human EGF. The sequence is that of U-actitoxin-Avd12b from Anemonia viridis (Snakelocks anemone).